The sequence spans 344 residues: Arginine N-succinyltransferase (344 aa).

Position 125 (Leu-125) interacts with succinyl-CoA. The Proton donor role is filled by His-229.

This sequence belongs to the arginine N-succinyltransferase family.

It catalyses the reaction succinyl-CoA + L-arginine = N(2)-succinyl-L-arginine + CoA + H(+). Its pathway is amino-acid degradation; L-arginine degradation via AST pathway; L-glutamate and succinate from L-arginine: step 1/5. Functionally, catalyzes the transfer of succinyl-CoA to arginine to produce N(2)-succinylarginine. This chain is Arginine N-succinyltransferase, found in Shigella boydii serotype 18 (strain CDC 3083-94 / BS512).